A 1222-amino-acid polypeptide reads, in one-letter code: ATP-dependent helicase/nuclease subunit A (1222 aa).

Residues 39 to 495 (QKRTAQQIEA…ILLKENFRSQ (457 aa)) form the UvrD-like helicase ATP-binding domain. 60-67 (ASAGSGKT) serves as a coordination point for ATP. The region spanning 524–810 (QLIAGSHAQT…NLMTIHKSKG (287 aa)) is the UvrD-like helicase C-terminal domain.

This sequence belongs to the helicase family. AddA subfamily. In terms of assembly, heterodimer of AddA and AddB/RexB. The cofactor is Mg(2+).

It carries out the reaction Couples ATP hydrolysis with the unwinding of duplex DNA by translocating in the 3'-5' direction.. It catalyses the reaction ATP + H2O = ADP + phosphate + H(+). In terms of biological role, the heterodimer acts as both an ATP-dependent DNA helicase and an ATP-dependent, dual-direction single-stranded exonuclease. Recognizes the chi site generating a DNA molecule suitable for the initiation of homologous recombination. The AddA nuclease domain is required for chi fragment generation; this subunit has the helicase and 3' -&gt; 5' nuclease activities. In Streptococcus pyogenes serotype M3 (strain ATCC BAA-595 / MGAS315), this protein is ATP-dependent helicase/nuclease subunit A.